We begin with the raw amino-acid sequence, 81 residues long: MRHLLGLPQLASRAFSTTVRQMKNRVPEKQKIFLEDNGLPVHIKGGTTDAILYRLTMTLTVVGTGYSLYWLLIAAMPKRKA.

A mitochondrion-targeting transit peptide spans 1–21; the sequence is MRHLLGLPQLASRAFSTTVRQ. The helical transmembrane segment at 51 to 72 threads the bilayer; that stretch reads ILYRLTMTLTVVGTGYSLYWLL.

Belongs to the cytochrome c oxidase VIIa family. Component of the complex IV (CIV, cytochrome c oxidase). The complex exists as a monomer or a dimer and forms supercomplexes (SCs) in the inner mitochondrial membrane with NADH-ubiquinone oxidoreductase (complex I, CI) and ubiquinol-cytochrome c oxidoreductase (cytochrome b-c1 complex, complex III, CIII), resulting in different assemblies (supercomplex SCI(1)III(2)IV(1) and megacomplex MCI(2)III(2)IV(2)).

Its subcellular location is the mitochondrion inner membrane. It functions in the pathway energy metabolism; oxidative phosphorylation. Functionally, component of the mitochondrial respiratory complex IV (CIV, also named cytochrome c oxidase complex), the last enzyme in the mitochondrial electron transport chain which drives oxidative phosphorylation. The CIV complex is the component of the respiratory chain that catalyzes the reduction of oxygen to water. Acts as an assembly factor that specifically drives the homodimerization of CIV complexes, mediating the formation of mitochondrial respiratory supercomplexes (respirasomes) containing two CIV: supercomplxes with two molecules of CIV show improved activity. This is Cytochrome c oxidase subunit 7A1, mitochondrial from Danio rerio (Zebrafish).